The primary structure comprises 344 residues: Serine/arginine-rich splicing factor 6 (344 aa).

In terms of domain architecture, RRM 1 spans 1-72 (MPRVYIGRLS…ERVIVEHARG (72 aa)). Residues Ser45, Ser81, and Ser84 each carry the phosphoserine modification. The segment at 75–103 (RDRDGYSYGSRSGGGGYSSRRTSGRDKYG) is disordered. The RRM 2 domain maps to 110–183 (YRLIVENLSS…RNIRLIEDKP (74 aa)). An N6-acetyllysine modification is found at Lys165. The segment at 176 to 344 (IRLIEDKPRT…RSRSRSSSRD (169 aa)) is disordered. Lys182 is covalently cross-linked (Glycyl lysine isopeptide (Lys-Gly) (interchain with G-Cter in SUMO2)). The segment covering 185–250 (TSHRRSYSGS…RKSRSKSKSK (66 aa)) has biased composition (basic residues). Composition is skewed to basic and acidic residues over residues 264–273 (RSKDEYEKSR) and 280–291 (SPKENGKGDIKS). A phosphoserine mark is found at Ser297 and Ser299. Ser303 carries the phosphoserine; by DYRK1A modification. Residues Ser314 and Ser316 each carry the phosphoserine modification. The segment covering 322-344 (ATSRSRSRSRSKSRSRSRSSSRD) has biased composition (basic residues).

It belongs to the splicing factor SR family. As to quaternary structure, binds SREK1/SFRS12. Interacts with DYRK1A. Extensively phosphorylated on serine residues in the RS domain. Phosphorylated by DYRK1A, probably in the RS domain. Phosphorylation by DYRK1A modulates alternative splice site selection and inhibits the expression of MAPT/Tau exon 10.

Its subcellular location is the nucleus. It is found in the nucleus speckle. Functionally, plays a role in constitutive splicing and modulates the selection of alternative splice sites. Plays a role in the alternative splicing of MAPT/Tau exon 10. Binds to alternative exons of TNC pre-mRNA and promotes the expression of alternatively spliced TNC. Plays a role in wound healing and in the regulation of keratinocyte differentiation and proliferation via its role in alternative splicing. The sequence is that of Serine/arginine-rich splicing factor 6 (SRSF6) from Homo sapiens (Human).